Reading from the N-terminus, the 275-residue chain is NH(3)-dependent NAD(+) synthetase (275 aa).

46-53 provides a ligand contact to ATP; the sequence is GISGGQDS. Asp-52 serves as a coordination point for Mg(2+). Residue Arg-140 participates in deamido-NAD(+) binding. Thr-160 contacts ATP. Glu-165 contributes to the Mg(2+) binding site. Deamido-NAD(+)-binding residues include Lys-173 and Asp-180. Lys-189 and Thr-211 together coordinate ATP. Residue 260–261 participates in deamido-NAD(+) binding; it reads HK.

This sequence belongs to the NAD synthetase family. In terms of assembly, homodimer.

It carries out the reaction deamido-NAD(+) + NH4(+) + ATP = AMP + diphosphate + NAD(+) + H(+). It functions in the pathway cofactor biosynthesis; NAD(+) biosynthesis; NAD(+) from deamido-NAD(+) (ammonia route): step 1/1. In terms of biological role, catalyzes the ATP-dependent amidation of deamido-NAD to form NAD. Uses ammonia as a nitrogen source. The protein is NH(3)-dependent NAD(+) synthetase of Escherichia coli O139:H28 (strain E24377A / ETEC).